The primary structure comprises 172 residues: Putative phosphoesterase BCE_1348 (172 aa).

The active-site Proton donor is His34. 2 consecutive short sequence motifs (HXTX) follow at residues 34–37 and 115–118; these read HITL and HLTI. His115 serves as the catalytic Proton acceptor.

Belongs to the 2H phosphoesterase superfamily. YjcG family.

The chain is Putative phosphoesterase BCE_1348 from Bacillus cereus (strain ATCC 10987 / NRS 248).